The sequence spans 357 residues: Uroporphyrinogen decarboxylase (357 aa).

Substrate is bound by residues 30-34 (RQAGR), D79, Y154, S209, and H336.

It belongs to the uroporphyrinogen decarboxylase family. Homodimer.

Its subcellular location is the cytoplasm. The enzyme catalyses uroporphyrinogen III + 4 H(+) = coproporphyrinogen III + 4 CO2. Its pathway is porphyrin-containing compound metabolism; protoporphyrin-IX biosynthesis; coproporphyrinogen-III from 5-aminolevulinate: step 4/4. Functionally, catalyzes the decarboxylation of four acetate groups of uroporphyrinogen-III to yield coproporphyrinogen-III. The sequence is that of Uroporphyrinogen decarboxylase from Mycobacterium bovis (strain ATCC BAA-935 / AF2122/97).